Here is a 188-residue protein sequence, read N- to C-terminus: ATP synthase subunit delta (188 aa).

It belongs to the ATPase delta chain family. As to quaternary structure, F-type ATPases have 2 components, F(1) - the catalytic core - and F(0) - the membrane proton channel. F(1) has five subunits: alpha(3), beta(3), gamma(1), delta(1), epsilon(1). F(0) has three main subunits: a(1), b(2) and c(10-14). The alpha and beta chains form an alternating ring which encloses part of the gamma chain. F(1) is attached to F(0) by a central stalk formed by the gamma and epsilon chains, while a peripheral stalk is formed by the delta and b chains.

It is found in the cell inner membrane. Functionally, f(1)F(0) ATP synthase produces ATP from ADP in the presence of a proton or sodium gradient. F-type ATPases consist of two structural domains, F(1) containing the extramembraneous catalytic core and F(0) containing the membrane proton channel, linked together by a central stalk and a peripheral stalk. During catalysis, ATP synthesis in the catalytic domain of F(1) is coupled via a rotary mechanism of the central stalk subunits to proton translocation. This protein is part of the stalk that links CF(0) to CF(1). It either transmits conformational changes from CF(0) to CF(1) or is implicated in proton conduction. The protein is ATP synthase subunit delta of Paracoccus denitrificans (strain Pd 1222).